The sequence spans 444 residues: Adiponectin receptor protein (444 aa).

The segment covering 1-13 (MDSATNLLEQQGS) has biased composition (polar residues). The disordered stretch occupies residues 1 to 24 (MDSATNLLEQQGSAADVSGGSHPA). The Cytoplasmic segment spans residues 1 to 204 (MDSATNLLEQ…KSIFRVHTET (204 aa)). The chain crosses the membrane as a helical span at residues 205-225 (GNIWTHLLGCIAFIGVALYFI). The Extracellular segment spans residues 226–237 (SRPSVEIQTQEK). The helical transmembrane segment at 238–258 (IVFGAFFIGAIVCLGFSFAFH) threads the bilayer. His-258 contributes to the Zn(2+) binding site. The Cytoplasmic segment spans residues 259 to 276 (TLSCHSVEMGRLFSKLDY). A helical transmembrane segment spans residues 277–297 (CGIALLIMGSFVPWLYYGFYC). The Extracellular portion of the chain corresponds to 298–302 (HYQPK). The chain crosses the membrane as a helical span at residues 303–323 (VIYLSVVSILGILSIVVSLWD). Topologically, residues 324-334 (KFSEPALRPLR) are cytoplasmic. The chain crosses the membrane as a helical span at residues 335-355 (AGVFMSFGLSGVIPAIHYSIM). Residues 356–365 (EGWFSQMSRA) lie on the Extracellular side of the membrane. The chain crosses the membrane as a helical span at residues 366–386 (SLGWLILMGLLYILGALLYAL). Over 387-405 (RVPERWFPGKFDIWGQSHQ) the chain is Cytoplasmic. Positions 404 and 408 each coordinate Zn(2+). A helical transmembrane segment spans residues 406–426 (IFHILVIAAAFVHYHGISEMA). The Extracellular portion of the chain corresponds to 427 to 444 (MYRVMYSECTVPIEPITF).

It belongs to the ADIPOR family. As to expression, in larval and adult brain, expressed in insulin-producing cells and in neurons of the subesophageal region. Also expressed in lateral neurons of the adult brain (at protein level). In third instar larvae, expressed in central nervous system (CNS), imaginal disk, salivary gland, fat body, gut and malphigian tubules.

The protein resides in the cell membrane. Its function is as follows. Adiponectin receptor. In insulin-producing cells, regulates insulin secretion and controls glucose and lipid metabolism. The protein is Adiponectin receptor protein (AdipoR) of Drosophila melanogaster (Fruit fly).